A 185-amino-acid chain; its full sequence is Intraflagellar transport protein 22 homolog (185 aa).

GTP contacts are provided by residues G10–T17, D63–D67, and H123–G126. S137 carries the phosphoserine modification.

This sequence belongs to the small GTPase superfamily. Rab family. In terms of assembly, component of the IFT complex B, at least composed of IFT20, IFT22, IFT25, IFT27, IFT46, IFT52, TRAF3IP1/IFT54, IFT57, IFT74, IFT80, IFT81, and IFT88. Interacts with IFT88. Interacts with CFAP61.

The protein resides in the cell projection. It is found in the cilium. Small GTPase-like component of the intraflagellar transport (IFT) complex B. The protein is Intraflagellar transport protein 22 homolog (Ift22) of Rattus norvegicus (Rat).